Consider the following 818-residue polypeptide: Nibrin (818 aa).

Residues 22 to 70 (YVVGRKNCEILLTNDQSISRVHAVLTVTEQAVTLKDSSKYGTFVNGEKL) form the FHA domain. 2 consecutive BRCT domains span residues 91–168 (SKFS…SALS) and 211–301 (GKTF…LAAI). Disordered regions lie at residues 372–716 (AVGE…DLPR), 729–757 (NNSS…KKNV), and 793–818 (EEKL…AKKR). A compositionally biased stretch (polar residues) spans 379–405 (KTNPTQKASTTNKPLSLGQEPSSTRIV). Over residues 409 to 419 (VMSSESFSVVE) the composition is skewed to low complexity. Over residues 444–469 (APSSGNTTLKHSPQKQTALTSFFQPS) the composition is skewed to polar residues. The Nuclear localization signal motif lies at 470–475 (SKKRPR). Polar residues predominate over residues 515 to 530 (EETSLGQACGTGQNSS). Residues 549-571 (TAADDLEMSLEELEFLMSDEMDE) are compositionally biased toward acidic residues. Over residues 586 to 602 (GLTSKINSEQLSNQQEV) the composition is skewed to polar residues. Residues 603–612 (TESKGRKGEK) are compositionally biased toward basic and acidic residues. Residues 613–625 (NQQSSSSNIQSMQ) show a composition bias toward low complexity. Composition is skewed to polar residues over residues 633–644 (VTNQDTQTQSKR) and 653–662 (SSANKGPSKN). Positions 663–675 (KTPELEEVKKEEV) are enriched in basic and acidic residues. Composition is skewed to polar residues over residues 678-692 (VVNS…QTSE) and 699-708 (MQASTSNSGP). A compositionally biased stretch (basic and acidic residues) spans 793–808 (EEKLNEREETLGDDLF). Positions 804–813 (GDDLFRYNPR) match the FxF/Y motif motif.

This sequence belongs to the Nibrin family. Component of the MRN complex composed of two heterodimers rad50 and mre11 associated with a single nbn.

The protein localises to the nucleus. It localises to the chromosome. It is found in the PML body. The protein resides in the telomere. Its function is as follows. Component of the MRN complex, which plays a central role in double-strand break (DSB) repair, DNA recombination, maintenance of telomere integrity and meiosis. The MRN complex is involved in the repair of DNA double-strand breaks (DSBs) via homologous recombination (HR), an error-free mechanism which primarily occurs during S and G2 phases. The complex (1) mediates the end resection of damaged DNA, which generates proper single-stranded DNA, a key initial steps in HR, and is (2) required for the recruitment of other repair factors and efficient activation of ATM and ATR upon DNA damage. The MRN complex possesses single-strand endonuclease activity and double-strand-specific 3'-5' exonuclease activity, which are provided by MRE11, to initiate end resection, which is required for single-strand invasion and recombination. Within the MRN complex, nbn acts as a protein-protein adapter, which specifically recognizes and binds phosphorylated proteins, promoting their recruitment to DNA damage sites. Recruits mre11 and rad50 components of the MRN complex to DSBs in response to DNA damage. Promotes the recruitment of PI3/PI4-kinase family members atm, atr, and probably DNA-PKcs to the DNA damage sites, activating their functions. Mediates the recruitment of phosphorylated rbbp8/CtIP to DSBs, leading to cooperation between the MRN complex and rbbp8/CtIP to initiate end resection. The MRN complex and rbbp8/CtIP are also required for chromosome alignment during metaphase. The protein is Nibrin (nbn) of Danio rerio (Zebrafish).